The chain runs to 462 residues: Cysteine--tRNA ligase (462 aa).

Residue Cys-28 participates in Zn(2+) binding. Residues 30 to 40 carry the 'HIGH' region motif; it reads MTVYDYCHIGH. Cys-209, His-234, and Glu-238 together coordinate Zn(2+). The 'KMSKS' region signature appears at 266–270; the sequence is KMSKS. Residue Lys-269 coordinates ATP.

This sequence belongs to the class-I aminoacyl-tRNA synthetase family. As to quaternary structure, monomer. The cofactor is Zn(2+).

Its subcellular location is the cytoplasm. It catalyses the reaction tRNA(Cys) + L-cysteine + ATP = L-cysteinyl-tRNA(Cys) + AMP + diphosphate. The chain is Cysteine--tRNA ligase from Pseudomonas fluorescens (strain SBW25).